The primary structure comprises 205 residues: MSYSCEYTPLNMALVPMVVERTLRGERSYDIFSRLLKERIIFMTGKVEDYMANIIVAQMIFLEAENPEKDIYLYINSPGGNITSGMSIYDTMQFIKPNVSTFCMGQAASMGAFLLAAGTKGKRFCLPNARMMIHQPMGGFQGQATDIQIHAKEILKVKNRMNELMAKHIGKTLQVIEQDTERDRFLSANEAVDYGLVDAILSHRI.

The active-site Nucleophile is Ser109. The active site involves His134.

The protein belongs to the peptidase S14 family. As to quaternary structure, fourteen ClpP subunits assemble into 2 heptameric rings which stack back to back to give a disk-like structure with a central cavity, resembling the structure of eukaryotic proteasomes.

It is found in the cytoplasm. It catalyses the reaction Hydrolysis of proteins to small peptides in the presence of ATP and magnesium. alpha-casein is the usual test substrate. In the absence of ATP, only oligopeptides shorter than five residues are hydrolyzed (such as succinyl-Leu-Tyr-|-NHMec, and Leu-Tyr-Leu-|-Tyr-Trp, in which cleavage of the -Tyr-|-Leu- and -Tyr-|-Trp bonds also occurs).. Cleaves peptides in various proteins in a process that requires ATP hydrolysis. Has a chymotrypsin-like activity. Plays a major role in the degradation of misfolded proteins. This chain is ATP-dependent Clp protease proteolytic subunit, found in Baumannia cicadellinicola subsp. Homalodisca coagulata.